An 82-amino-acid chain; its full sequence is Precursor of CEP3 (82 aa).

An N-terminal signal peptide occupies residues 1–24 (MATINVYVFAFIFLLTISVGSIEG). The propeptide occupies 25–63 (RKLTKFTVTTSEEIRAGGSVLSSSPPTEPLESPPSHGVD). Residues 40–82 (AGGSVLSSSPPTEPLESPPSHGVDTFRPTEPGHSPGIGHSVHN) are disordered. Residues Pro67, Pro70, and Pro74 each carry the hydroxyproline modification. A propeptide spanning residues 79-82 (SVHN) is cleaved from the precursor.

The protein belongs to the C-terminally encoded plant signaling peptide (CEP) family. As to quaternary structure, interacts with the CEP receptor CEPR1. The mature small signaling peptide is generated by proteolytic processing of the longer precursor. In terms of tissue distribution, mostly expressed in roots. Present in lateral roots (especially in vasculature), root-hypocotyl junction and cotyledons.

It is found in the secreted. Its subcellular location is the extracellular space. It localises to the apoplast. Functionally, extracellular signaling peptide that represses primary root growth rate and significantly inhibits lateral root formation. Promotes shoot growth. Modulates leaf morphology. Regulates systemic nitrogen (N)-demand signaling. Mediates systemic up-regulation of genes involved in N uptake and assimilation pathways. This chain is Precursor of CEP3, found in Arabidopsis thaliana (Mouse-ear cress).